A 339-amino-acid polypeptide reads, in one-letter code: Trace amine-associated receptor 1 (339 aa).

Topologically, residues Met1–Ala24 are extracellular. Disulfide bonds link Cys5-Cys178, Cys13-Cys88, and Cys96-Cys182. Residues Asn10 and Asn17 are each glycosylated (N-linked (GlcNAc...) asparagine). The helical transmembrane segment at Ser25–Ser49 threads the bilayer. The Cytoplasmic portion of the chain corresponds to His50–Asn59. A helical membrane pass occupies residues Trp60–Met81. The Extracellular segment spans residues Val82–Cys96. Residues Lys97–Ile119 form a helical membrane-spanning segment. Residue Asp103 coordinates 2-phenylethylamine. Over Asp120–Val139 the chain is Cytoplasmic. Residues Ile140 to Leu161 form a helical membrane-spanning segment. Residues Glu162–Lys188 lie on the Extracellular side of the membrane. The segment at His175 to Phe186 is extracellular Loop 2 (ECL2). Residues Ile189 to Tyr211 traverse the membrane as a helical segment. At Arg212–Ala249 the chain is on the cytoplasmic side. Residues Val250 to Met273 form a helical membrane-spanning segment. Over Asp274–Asn286 the chain is Extracellular. The chain crosses the membrane as a helical span at residues Asp287–Phe307. The Cytoplasmic segment spans residues Tyr308–Ser339.

Belongs to the G-protein coupled receptor 1 family. Expressed at low level in both the central and peripheral nervous system. Moderately expressed in stomach. Low levels in amygdala, kidney, and lung, and small intestine. Trace amounts in cerebellum, dorsal root ganglia, hippocampus, hypothalamus, liver, medulla, pancreas, pituitary, pontine reticular formation, prostate, skeletal muscle and spleen.

It localises to the endomembrane system. It is found in the endoplasmic reticulum membrane. The protein resides in the cell membrane. With respect to regulation, activated by SEP-363856 small molecule: IHCH-7179 acts both as an agonist activator for HTR1A and TAAR1. Functionally, intracellular G-protein coupled receptor for trace amines, which recognizes endogenous amine-containing metabolites such as beta-phenylethylamine (beta-PEA), 3-iodothyronamine (T1AM), isoamylamine (IAA), cadaverine (CAD), cyclohexylamine (CHA), p-tyramine (p-TYR), trimethylamine (TMA), octopamine and tryptamine. Also functions as a receptor for various drugs and psychoactive substances, such as amphetamine and methamphetamine. Unresponsive to classical biogenic amines, such as epinephrine and histamine and only partially activated by dopamine and serotonin. Expressed in both the central and peripheral nervous system: TAAR1 activation regulates the activity of several neurotransmitter signaling pathways by (1) decreasing the basal firing rates of the neurons involved and by (2) lowering the sensitivity of receptors to neurotransmitters. Ligand binding causes a conformation change that triggers signaling via guanine nucleotide-binding proteins (G proteins) and modulates the activity of downstream effectors. TAAR1 is coupled with different G(i)/G(o)-, G(s)- or G(q)/G(11) classes of G alpha proteins depending on the ligand. CAD-binding is coupled to G(i)/G(o) G alpha proteins and mediates inhibition of adenylate cyclase activity. T1AM- or beta-PEA-binding is coupled to G(s) G alpha proteins and mediates activation of adenylate cyclase activity. CHA- or IAA-binding is coupled to G(q)/G(11) G alpha proteins and activates phospholipase C-beta, releasing diacylglycerol (DAG) and inositol 1,4,5-trisphosphate (IP3) second messengers. TMA-binding is coupled with all three G(i)/G(o)-, G(s)- or G(q)/G(11) G alpha protein subtypes. Amphetamine-binding is coupled with G(s)- or G(12)/G(13) G alpha protein subtypes. This Homo sapiens (Human) protein is Trace amine-associated receptor 1.